The following is a 210-amino-acid chain: Glycerol-3-phosphate acyltransferase 2 (210 aa).

6 helical membrane passes run leucine 4–tyrosine 24, phenylalanine 54–valine 74, leucine 82–leucine 102, isoleucine 114–valine 134, phenylalanine 141–glutamine 161, and aspartate 163–proline 183.

The protein belongs to the PlsY family. Probably interacts with PlsX.

It is found in the cell membrane. The enzyme catalyses an acyl phosphate + sn-glycerol 3-phosphate = a 1-acyl-sn-glycero-3-phosphate + phosphate. The protein operates within lipid metabolism; phospholipid metabolism. Catalyzes the transfer of an acyl group from acyl-phosphate (acyl-PO(4)) to glycerol-3-phosphate (G3P) to form lysophosphatidic acid (LPA). This enzyme utilizes acyl-phosphate as fatty acyl donor, but not acyl-CoA or acyl-ACP. This is Glycerol-3-phosphate acyltransferase 2 from Dehalococcoides mccartyi (strain ATCC BAA-2266 / KCTC 15142 / 195) (Dehalococcoides ethenogenes (strain 195)).